We begin with the raw amino-acid sequence, 214 residues long: MIGFLQGKVLNLEADNVLLLVNQVGYEILLPATVVASVQNKLSDEFLNLYIYYHQTDRQPKPVLIGFDSAEEKDFFQLFITVDAIGPLKAAKAMEHSVSTIARAIENKDVAFLATLKGIGRRTAQKIVAALHGKAGRFLLAADEAGAGDGVSKTGTPSLPIQKAIDQVVDVLVQQLGHTPSAAKMMVAQALDRDPEIMTPEALFDEVYKGDVDA.

Residues 1 to 68 (MIGFLQGKVL…QPKPVLIGFD (68 aa)) form a domain I region. Residues 69-146 (SAEEKDFFQL…RFLLAADEAG (78 aa)) are domain II. The interval 147-160 (AGDGVSKTGTPSLP) is flexible linker. Residues 161–214 (IQKAIDQVVDVLVQQLGHTPSAAKMMVAQALDRDPEIMTPEALFDEVYKGDVDA) form a domain III region.

This sequence belongs to the RuvA family. In terms of assembly, homotetramer. Forms an RuvA(8)-RuvB(12)-Holliday junction (HJ) complex. HJ DNA is sandwiched between 2 RuvA tetramers; dsDNA enters through RuvA and exits via RuvB. An RuvB hexamer assembles on each DNA strand where it exits the tetramer. Each RuvB hexamer is contacted by two RuvA subunits (via domain III) on 2 adjacent RuvB subunits; this complex drives branch migration. In the full resolvosome a probable DNA-RuvA(4)-RuvB(12)-RuvC(2) complex forms which resolves the HJ.

The protein localises to the cytoplasm. The RuvA-RuvB-RuvC complex processes Holliday junction (HJ) DNA during genetic recombination and DNA repair, while the RuvA-RuvB complex plays an important role in the rescue of blocked DNA replication forks via replication fork reversal (RFR). RuvA specifically binds to HJ cruciform DNA, conferring on it an open structure. The RuvB hexamer acts as an ATP-dependent pump, pulling dsDNA into and through the RuvAB complex. HJ branch migration allows RuvC to scan DNA until it finds its consensus sequence, where it cleaves and resolves the cruciform DNA. This Desulforapulum autotrophicum (strain ATCC 43914 / DSM 3382 / VKM B-1955 / HRM2) (Desulfobacterium autotrophicum) protein is Holliday junction branch migration complex subunit RuvA.